A 433-amino-acid chain; its full sequence is tRNA-2-methylthio-N(6)-dimethylallyladenosine synthase (433 aa).

The region spanning 4–119 (KKLFIQTLGC…ITQAIKTPKF (116 aa)) is the MTTase N-terminal domain. Cys13, Cys50, Cys82, Cys151, Cys155, and Cys158 together coordinate [4Fe-4S] cluster. A Radical SAM core domain is found at 137–370 (RNSIYKSYIN…QNRHSEILDK (234 aa)). In terms of domain architecture, TRAM spans 373-433 (KKQENKTFKV…KRMVLYGEIV (61 aa)).

It belongs to the methylthiotransferase family. MiaB subfamily. In terms of assembly, monomer. It depends on [4Fe-4S] cluster as a cofactor.

It is found in the cytoplasm. It carries out the reaction N(6)-dimethylallyladenosine(37) in tRNA + (sulfur carrier)-SH + AH2 + 2 S-adenosyl-L-methionine = 2-methylsulfanyl-N(6)-dimethylallyladenosine(37) in tRNA + (sulfur carrier)-H + 5'-deoxyadenosine + L-methionine + A + S-adenosyl-L-homocysteine + 2 H(+). In terms of biological role, catalyzes the methylthiolation of N6-(dimethylallyl)adenosine (i(6)A), leading to the formation of 2-methylthio-N6-(dimethylallyl)adenosine (ms(2)i(6)A) at position 37 in tRNAs that read codons beginning with uridine. The sequence is that of tRNA-2-methylthio-N(6)-dimethylallyladenosine synthase from Campylobacter jejuni subsp. jejuni serotype O:2 (strain ATCC 700819 / NCTC 11168).